The chain runs to 358 residues: Phosphoserine aminotransferase (358 aa).

R41 is an L-glutamate binding site. Residues 75–76 (AS), W100, T148, D167, and Q190 contribute to the pyridoxal 5'-phosphate site. K191 is subject to N6-(pyridoxal phosphate)lysine. 233 to 234 (NT) is a pyridoxal 5'-phosphate binding site.

It belongs to the class-V pyridoxal-phosphate-dependent aminotransferase family. SerC subfamily. As to quaternary structure, homodimer. Pyridoxal 5'-phosphate serves as cofactor.

The protein localises to the cytoplasm. It carries out the reaction O-phospho-L-serine + 2-oxoglutarate = 3-phosphooxypyruvate + L-glutamate. The catalysed reaction is 4-(phosphooxy)-L-threonine + 2-oxoglutarate = (R)-3-hydroxy-2-oxo-4-phosphooxybutanoate + L-glutamate. Its pathway is amino-acid biosynthesis; L-serine biosynthesis; L-serine from 3-phospho-D-glycerate: step 2/3. The protein operates within cofactor biosynthesis; pyridoxine 5'-phosphate biosynthesis; pyridoxine 5'-phosphate from D-erythrose 4-phosphate: step 3/5. In terms of biological role, catalyzes the reversible conversion of 3-phosphohydroxypyruvate to phosphoserine and of 3-hydroxy-2-oxo-4-phosphonooxybutanoate to phosphohydroxythreonine. The polypeptide is Phosphoserine aminotransferase (Campylobacter jejuni subsp. jejuni serotype O:2 (strain ATCC 700819 / NCTC 11168)).